A 380-amino-acid polypeptide reads, in one-letter code: Cytochrome b (380 aa).

4 helical membrane-spanning segments follow: residues 34–54, 78–99, 114–134, and 179–199; these read FGSL…LLAM, WLIR…YLHI, WNIG…GYVL, and LFAL…VHLT. Residues H84 and H98 each contribute to the heme b site. Heme b contacts are provided by H183 and H197. H202 is an a ubiquinone binding site. Helical transmembrane passes span 227–247, 289–309, 321–341, and 348–368; these read IKDL…ALFA, LGGV…PLLH, LSQM…WVGS, and FIII…VLFP.

It belongs to the cytochrome b family. As to quaternary structure, the cytochrome bc1 complex contains 11 subunits: 3 respiratory subunits (MT-CYB, CYC1 and UQCRFS1), 2 core proteins (UQCRC1 and UQCRC2) and 6 low-molecular weight proteins (UQCRH/QCR6, UQCRB/QCR7, UQCRQ/QCR8, UQCR10/QCR9, UQCR11/QCR10 and a cleavage product of UQCRFS1). This cytochrome bc1 complex then forms a dimer. It depends on heme b as a cofactor.

It is found in the mitochondrion inner membrane. In terms of biological role, component of the ubiquinol-cytochrome c reductase complex (complex III or cytochrome b-c1 complex) that is part of the mitochondrial respiratory chain. The b-c1 complex mediates electron transfer from ubiquinol to cytochrome c. Contributes to the generation of a proton gradient across the mitochondrial membrane that is then used for ATP synthesis. In Aphelocoma coerulescens (Florida scrub-jay), this protein is Cytochrome b (MT-CYB).